The sequence spans 763 residues: Protein translocase subunit SecA 2 (763 aa).

ATP is bound by residues Gln-83, 101–105, and Asp-490; that span reads GEGKT.

This sequence belongs to the SecA family. As to quaternary structure, monomer and homodimer. Part of the essential Sec protein translocation apparatus which comprises SecA, SecYEG and auxiliary proteins SecDF. Other proteins may also be involved.

Its subcellular location is the cell membrane. The protein resides in the cytoplasm. The enzyme catalyses ATP + H2O + cellular proteinSide 1 = ADP + phosphate + cellular proteinSide 2.. Part of the Sec protein translocase complex. Interacts with the SecYEG preprotein conducting channel. Has a central role in coupling the hydrolysis of ATP to the transfer of proteins into and across the cell membrane, serving as an ATP-driven molecular motor driving the stepwise translocation of polypeptide chains across the membrane. The protein is Protein translocase subunit SecA 2 of Corynebacterium glutamicum (strain R).